An 80-amino-acid chain; its full sequence is Serine rich endogenous peptide 15 (80 aa).

An N-terminal signal peptide occupies residues 1 to 28; sequence MSKEKSYVIALLLSLLLCLSFQVGVSEA. 2 consecutive short sequence motifs (SCOOP motif) follow at residues 32-46 and 66-80; these read AVTT…CANG and PRVA…GKGP. The disordered stretch occupies residues 37 to 80; it reads YSDSPRCANGSSASPPTRHCPRGRPRPPTPRVAVHSNSTKGKGP. 2 short sequence motifs (sxS motif essential for MIK2 binding) span residues 38 to 40 and 72 to 74; these read SDS and SNS. Positions 71 to 80 are enriched in polar residues; it reads HSNSTKGKGP.

Belongs to the serine rich endogenous peptide (SCOOP) phytocytokine family. Interacts with MIK2 (via extracellular leucine-rich repeat domain); this interaction triggers the formation of complex between MIK2 and the BAK1/SERK3 and SERK4 coreceptors, and subsequent BAK1 activation by phosphorylation. Mostly expressed in leaves, and, to a lower extent, in seedlings shoots, roots, stems, siliques, seeds and flowers.

The protein localises to the cell membrane. It is found in the secreted. It localises to the extracellular space. Its subcellular location is the apoplast. The protein resides in the endoplasmic reticulum. The protein localises to the golgi apparatus. In terms of biological role, brassicaceae-specific phytocytokine (plant endogenous peptide released into the apoplast) perceived by MIK2 in a BAK1/SERK3 and SERK4 coreceptors-dependent manner, that modulates various physiological and antimicrobial processes including growth prevention and reactive oxygen species (ROS) response regulation. Inhibits root growth. The sequence is that of Serine rich endogenous peptide 15 from Arabidopsis thaliana (Mouse-ear cress).